A 269-amino-acid polypeptide reads, in one-letter code: Cleavage and polyadenylation specificity factor subunit 4 (269 aa).

5 C3H1-type zinc fingers span residues 35-61 (KSGAAVCEFFLKAACGKGGMCPFRHIS), 62-89 (GEKTVVCKHWLRGLCKKGDQCEFLHEYD), 90-117 (MTKMPECYFYSKFGECSNKECPFLHIDP), 118-142 (ESKIKDCPWYDRGFCKHGPLCRHRH), and 143-169 (TRRVICVNYLVGFCPEGPSCKFMHPRF). The segment at 173–199 (MGTTEQPPLPQQTQPPAKQSNNPPLQR) is disordered. Residues Ser-200, Ser-202, and Ser-212 each carry the phosphoserine modification. The segment at 243–260 (VTCYKCGEKGHYANRCTK) adopts a CCHC-type zinc-finger fold. Ser-267 is modified (phosphoserine).

It belongs to the CPSF4/YTH1 family. Component of the cleavage and polyadenylation specificity factor (CPSF) complex, composed of CPSF1, CPSF2, CPSF3, CPSF4 and FIP1L1. Interacts with FIP1L1. In terms of assembly, (Microbial infection) Interacts with influenza A virus NS1 blocks processing of pre-mRNAs, thereby preventing nuclear export of host cell mRNAs.

It localises to the nucleus. Its function is as follows. Component of the cleavage and polyadenylation specificity factor (CPSF) complex that play a key role in pre-mRNA 3'-end formation, recognizing the AAUAAA signal sequence and interacting with poly(A) polymerase and other factors to bring about cleavage and poly(A) addition. CPSF4 binds RNA polymers with a preference for poly(U). This Homo sapiens (Human) protein is Cleavage and polyadenylation specificity factor subunit 4 (CPSF4).